The following is a 267-amino-acid chain: 4-hydroxy-tetrahydrodipicolinate reductase (267 aa).

11–16 (GAAGRM) is a binding site for NAD(+). Residue Arg-39 participates in NADP(+) binding. NAD(+)-binding positions include 100–102 (GTT) and 126–129 (APNF). His-156 functions as the Proton donor/acceptor in the catalytic mechanism. A (S)-2,3,4,5-tetrahydrodipicolinate-binding site is contributed by His-157. The active-site Proton donor is the Lys-160. 166–167 (GT) contacts (S)-2,3,4,5-tetrahydrodipicolinate.

This sequence belongs to the DapB family.

It localises to the cytoplasm. It carries out the reaction (S)-2,3,4,5-tetrahydrodipicolinate + NAD(+) + H2O = (2S,4S)-4-hydroxy-2,3,4,5-tetrahydrodipicolinate + NADH + H(+). The enzyme catalyses (S)-2,3,4,5-tetrahydrodipicolinate + NADP(+) + H2O = (2S,4S)-4-hydroxy-2,3,4,5-tetrahydrodipicolinate + NADPH + H(+). It participates in amino-acid biosynthesis; L-lysine biosynthesis via DAP pathway; (S)-tetrahydrodipicolinate from L-aspartate: step 4/4. In terms of biological role, catalyzes the conversion of 4-hydroxy-tetrahydrodipicolinate (HTPA) to tetrahydrodipicolinate. In Moorella thermoacetica (strain ATCC 39073 / JCM 9320), this protein is 4-hydroxy-tetrahydrodipicolinate reductase.